Consider the following 680-residue polypeptide: WD repeat-containing protein 48 homolog (680 aa).

WD repeat units follow at residues 26 to 65 (QHRN…SEKY), 71 to 110 (HHND…CMST), 113 to 152 (THRD…ALTA), 164 to 203 (GSKD…RIMK), 206 to 245 (GHTE…CVQT), 248 to 287 (VHKE…NKTL), 290 to 329 (EEQA…RCTL), and 350 to 389 (KGGA…KKEQ). The interval 592 to 616 (ETTPSGGNANNSLQNSQSDANSEGS) is disordered.

The protein belongs to the WD repeat WDR48 family. Catalytic component of the Usp12-46 deubiquitylase complex consisting of Usp12-46, Wdr20 and Uaf1; regulatory subunit that, together wtih Wdr20, stabilizes Usp12-46. The Usp12-46 deubiquitylase complex associates with arr/arrow; the interaction leads to deubiquitination and stabilization of arr/arrow.

Regulatory component of the Usp12-46 deubiquitylase complex. activates deubiquitination by increasing the catalytic turnover without increasing the affinity of deubiquitinating enzymes for the substrate. The complex deubiquitylates the wg/wingless-signaling receptor arr/arrow, which stabilizes the receptor and increases its concentration at the cell surface; this enhances the sensitivity of cells to wg/wingless-signal stimulation. This increases the amplitude and spatial range of the signaling response to the wg/wingless morphogen gradient, facilitating the precise concentration-dependent regulation of its target genes. Together with Wdr20 and Usp12-46 required for wg/wingless-mediated signaling in the wing imaginal disc and for wg/wingless-dependent regulation of intestinal stem cell proliferation. This chain is WD repeat-containing protein 48 homolog, found in Drosophila sechellia (Fruit fly).